A 402-amino-acid polypeptide reads, in one-letter code: MKRLWQHCHAATLKGGKYSIVEDAALVTDGPLIHWIGPRAELPPGDYAERIDLGGAWLTPGLIDCHTHAVFGGNRSGEFEQRLEGVSYAEIAAAGGGIASTVRATREASEEELLASARKRLEPLLRDGVTALEIKSGYGLDLASERKMLRVIRRLGERLPATVRSTCLAAHALPPEYAGRADDYIEHICSTMLPALAGEGLVDAVDAFCEHLAFSPAQVERVFIAARELGLPVKLHAEQLSSLHGSSLAARYRALSADHLEYMTEDDARAMGEAGTVAVLLPGAFYLLRETQLPPIDALRRHGVAMAIASDLNPGTSPALSLRLMLNMACTLFRLTPEETLAGVTLHAARALGLEASHGSLEVGKLADFVAWDIERPAELAYWLGGDLPKRVIRHAEEVYRG.

Residues His66 and His68 each contribute to the Fe(3+) site. Residues His66 and His68 each coordinate Zn(2+). 4-imidazolone-5-propanoate-binding residues include Arg75, Tyr138, and His171. Tyr138 lines the N-formimidoyl-L-glutamate pocket. Residue His236 coordinates Fe(3+). Residue His236 coordinates Zn(2+). Gln239 is a 4-imidazolone-5-propanoate binding site. Residue Asp311 coordinates Fe(3+). Asp311 provides a ligand contact to Zn(2+). Residues Asn313 and Gly315 each contribute to the N-formimidoyl-L-glutamate site. Thr316 contributes to the 4-imidazolone-5-propanoate binding site.

Belongs to the metallo-dependent hydrolases superfamily. HutI family. Zn(2+) is required as a cofactor. Requires Fe(3+) as cofactor.

The protein localises to the cytoplasm. The enzyme catalyses 4-imidazolone-5-propanoate + H2O = N-formimidoyl-L-glutamate. The protein operates within amino-acid degradation; L-histidine degradation into L-glutamate; N-formimidoyl-L-glutamate from L-histidine: step 3/3. In terms of biological role, catalyzes the hydrolytic cleavage of the carbon-nitrogen bond in imidazolone-5-propanoate to yield N-formimidoyl-L-glutamate. It is the third step in the universal histidine degradation pathway. This is Imidazolonepropionase from Pseudomonas aeruginosa (strain ATCC 15692 / DSM 22644 / CIP 104116 / JCM 14847 / LMG 12228 / 1C / PRS 101 / PAO1).